The following is a 280-amino-acid chain: Urease accessory protein UreD 1 (280 aa).

It belongs to the UreD family. In terms of assembly, ureD, UreF and UreG form a complex that acts as a GTP-hydrolysis-dependent molecular chaperone, activating the urease apoprotein by helping to assemble the nickel containing metallocenter of UreC. The UreE protein probably delivers the nickel.

It localises to the cytoplasm. Required for maturation of urease via the functional incorporation of the urease nickel metallocenter. This chain is Urease accessory protein UreD 1, found in Brucella abortus biovar 1 (strain 9-941).